The primary structure comprises 520 residues: MTATPAVIGLSAGNRLLSASFGPTDLMPDKVSLGVGGGGGGGGGGGGGDAMSFAPPAPATPKLTAVAAHRLKLSPHGRAQVMRALRHHSSAAAALAPPPPPPPPPTPSPASRAAHAHDLESSLEAIVLLQRSMLEKQWELPFDDDNHAMAIGLAEDDDDTSKATVVVARSSVSARQRRMSGRRRGRTKNGAAHFAVSPELIQSRNRIYLRGTVSKELLTHKQVVHLSHKIKDGIWLQQQRSKLKEKLGNEPSYKQLAHSLKISPPELRSRMHESFLAREMLTMSNLRLVISIAQKYDNLGVELADLIQGGLIGLLRGIEKFDASRGFRISTYVYWWIRQGVSRALAENSKTFRLPTYLHERLIAIRGAKYELEDQGIAPTIENIAGSLNISEKKVLNATEAVNKVLSLDQQAFPSLNGLPGETLHSYIEDQNVANDPWHGFEEWYLKEEVNKLLNSTLNERERDIIRLYHGIGKQCHTWEDISRQFGLSRERVRQVGLIAMEKLKHAARRKNLEALLEDY.

The transit peptide at methionine 1–valine 66 directs the protein to the chloroplast. The span at glycine 37 to aspartate 49 shows a compositional bias: gly residues. Disordered stretches follow at residues glycine 37 to alanine 57, histidine 87 to histidine 117, and serine 171 to glycine 190. Over residues alanine 96–serine 108 the composition is skewed to pro residues. Basic residues predominate over residues arginine 175–threonine 187. The Polymerase core binding signature appears at aspartate 305–isoleucine 318. The H-T-H motif DNA-binding region spans tryptophan 479 to leucine 498.

It belongs to the sigma-70 factor family. In terms of tissue distribution, expressed in shoots. Expressed in the tips of fully elongated leaves. Expressed in leaf blades.

It is found in the plastid. The protein resides in the chloroplast. Sigma factors are initiation factors that promote the attachment of plastid-encoded RNA polymerase (PEP) to specific initiation sites and are then released. Controls the transcription of the psaA and psaB genes in chloroplast, and thus maintains the abundance of the core protein complex PsaA-PsaB of photosystem I (PSI) in the thylakoid membrane. Maintains PSI activity, sufficient rate of electron transfer from PSII to PSI, and photochemical efficiency. In Oryza sativa subsp. japonica (Rice), this protein is RNA polymerase sigma factor sigA.